A 410-amino-acid polypeptide reads, in one-letter code: Peptidase T (410 aa).

Zn(2+) is bound at residue H78. The active site involves D80. D140 is a Zn(2+) binding site. E174 (proton acceptor) is an active-site residue. 3 residues coordinate Zn(2+): E175, D197, and H379.

It belongs to the peptidase M20B family. It depends on Zn(2+) as a cofactor.

Its subcellular location is the cytoplasm. It catalyses the reaction Release of the N-terminal residue from a tripeptide.. Its function is as follows. Cleaves the N-terminal amino acid of tripeptides. This Staphylococcus saprophyticus subsp. saprophyticus (strain ATCC 15305 / DSM 20229 / NCIMB 8711 / NCTC 7292 / S-41) protein is Peptidase T.